Here is a 161-residue protein sequence, read N- to C-terminus: Regulator of ribonuclease activity A (161 aa).

It belongs to the RraA family. In terms of assembly, homotrimer. Binds to both RNA-binding sites in the C-terminal region of Rne and to RhlB.

The protein resides in the cytoplasm. Functionally, globally modulates RNA abundance by binding to RNase E (Rne) and regulating its endonucleolytic activity. Can modulate Rne action in a substrate-dependent manner by altering the composition of the degradosome. Modulates RNA-binding and helicase activities of the degradosome. The protein is Regulator of ribonuclease activity A of Shewanella oneidensis (strain ATCC 700550 / JCM 31522 / CIP 106686 / LMG 19005 / NCIMB 14063 / MR-1).